A 147-amino-acid polypeptide reads, in one-letter code: uncharacterized protein (147 aa).

This is an uncharacterized protein from Escherichia coli.